A 775-amino-acid chain; its full sequence is Serine/threonine-protein kinase-like protein CCR1 (775 aa).

Residues 1 to 23 form the signal peptide; that stretch reads METRCSLLFLSLILLYLPKPGSG. Residues 24–439 lie on the Extracellular side of the membrane; that stretch reads FGSSGPIAAS…DKHWHQLQRL (416 aa). N-linked (GlcNAc...) asparagine glycosylation is found at Asn-57, Asn-102, Asn-167, Asn-213, Asn-220, Asn-241, Asn-261, Asn-292, Asn-328, and Asn-360. One copy of the TNFR-Cys repeat lies at 351–406; the sequence is PCNEKEFAFNASILNEPDLTSLCVRKELMVCSPCGSDCSHGFFLSSSCTANSDRIC. Cystine bridges form between Cys-352/Cys-381, Cys-384/Cys-398, and Cys-388/Cys-406. Residue Asn-414 is glycosylated (N-linked (GlcNAc...) asparagine). A helical transmembrane segment spans residues 440–460; the sequence is VLIIGSCASALLIIIIGCCVV. The Cytoplasmic segment spans residues 461 to 775; that stretch reads PRIVTSPNKE…EHVARDALIF (315 aa). A Protein kinase domain is found at 520 to 770; it reads FKEFNELGRG…LANWLEHVAR (251 aa). Residues 526–534 and Lys-548 each bind ATP; that span reads LGRGSYGFV. Catalysis depends on Asp-645, which acts as the Proton acceptor.

It belongs to the protein kinase superfamily. Ser/Thr protein kinase family. In terms of assembly, homodimer. As to expression, expressed in roots, leaves, shoot apical meristems (SAM), and floral buds.

It is found in the membrane. It catalyses the reaction L-seryl-[protein] + ATP = O-phospho-L-seryl-[protein] + ADP + H(+). The catalysed reaction is L-threonyl-[protein] + ATP = O-phospho-L-threonyl-[protein] + ADP + H(+). Functionally, serine/threonine-protein kinase with low activity. The chain is Serine/threonine-protein kinase-like protein CCR1 (CCR1) from Arabidopsis thaliana (Mouse-ear cress).